Consider the following 114-residue polypeptide: Replication initiation control protein YabA (114 aa).

4 residues coordinate Zn(2+): His84, Cys86, Cys102, and Cys105.

The protein belongs to the YabA family. Homotetramer. Interacts with both DnaA and DnaN, acting as a bridge between these two proteins. It depends on Zn(2+) as a cofactor.

The protein localises to the cytoplasm. Its subcellular location is the nucleoid. In terms of biological role, involved in control of chromosome replication initiation. Inhibits the cooperative binding of DnaA to the oriC region, thus negatively regulating initiation of chromosome replication. Inhibits the ability of DnaA-ATP to form a helix on DNA; does not disassemble preformed DnaA-DNA helices. Decreases the residence time of DnaA on the chromosome at its binding sites (oriC, replication forks and promoter-binding sites). Tethers DnaA to the replication machinery via the DNA polymerase beta sliding clamp subunit (dnaN). Associates with oriC and other DnaA targets on the chromosome in a DnaA-dependent manner. This is Replication initiation control protein YabA from Ligilactobacillus salivarius (strain UCC118) (Lactobacillus salivarius).